Consider the following 622-residue polypeptide: Chaperone protein HscA homolog (622 aa).

The protein belongs to the heat shock protein 70 family.

Chaperone involved in the maturation of iron-sulfur cluster-containing proteins. Has a low intrinsic ATPase activity which is markedly stimulated by HscB. This chain is Chaperone protein HscA homolog, found in Burkholderia thailandensis (strain ATCC 700388 / DSM 13276 / CCUG 48851 / CIP 106301 / E264).